Consider the following 47-residue polypeptide: Large ribosomal subunit protein bL33 (47 aa).

It belongs to the bacterial ribosomal protein bL33 family.

The sequence is that of Large ribosomal subunit protein bL33 from Staphylococcus saprophyticus.